The sequence spans 254 residues: Protein GVQW3 (254 aa).

The chain is Protein GVQW3 from Homo sapiens (Human).